An 88-amino-acid polypeptide reads, in one-letter code: Small ribosomal subunit protein bS20 (88 aa).

The tract at residues 1–27 (MANSKSAKKRALQSEKRRQHNASRRSM) is disordered.

Belongs to the bacterial ribosomal protein bS20 family.

In terms of biological role, binds directly to 16S ribosomal RNA. This is Small ribosomal subunit protein bS20 from Shewanella denitrificans (strain OS217 / ATCC BAA-1090 / DSM 15013).